The chain runs to 274 residues: Large ribosomal subunit protein uL2 (274 aa).

The interval 223–274 is disordered; it reads VVMNPVDHPHGGGEGRTSGGRHPVSPWGVPTKGYKTRSNKRTDKYIVRRRNK.

It belongs to the universal ribosomal protein uL2 family. Part of the 50S ribosomal subunit. Forms a bridge to the 30S subunit in the 70S ribosome.

Functionally, one of the primary rRNA binding proteins. Required for association of the 30S and 50S subunits to form the 70S ribosome, for tRNA binding and peptide bond formation. It has been suggested to have peptidyltransferase activity; this is somewhat controversial. Makes several contacts with the 16S rRNA in the 70S ribosome. This chain is Large ribosomal subunit protein uL2, found in Vibrio cholerae serotype O1 (strain M66-2).